We begin with the raw amino-acid sequence, 197 residues long: Histone chaperone asf1b-A (197 aa).

It belongs to the ASF1 family. As to quaternary structure, interacts with histone H3 and histone H4.

The protein localises to the nucleus. In terms of biological role, histone chaperone that facilitates histone deposition and histone exchange and removal during nucleosome assembly and disassembly. The sequence is that of Histone chaperone asf1b-A (asf1ba) from Danio rerio (Zebrafish).